The primary structure comprises 576 residues: MDANSINSFFLIGALLTAVSVLLSPMSSRLGIPILLIFLAVGILAGEDGPGGILFDDYSTAYLVSNLALAIILLDGGMRTRVASFRVALWPALSLATFGVAITTSITGMMAAWLFDLHWLQGLLVGAIVGSTDAAAVFSLLKGRSLNERVGATLEIESGSNDPMAVFLTVTLIAILANVDTEMSFSFMFISFIKQFGLGICLGLGGGWMLWKLVNLSKLADGLYSILVLSGGLIIYAASNKLGGSGILSIYLVGLFLGNKPTRGRHAILNVLDGMTWVSQIGMFLVLGLLLTPSDLVDILIPGFALAFGMILFARPVAVWISLLPFKSFSSRDRWFISWVGLRGAVPIILAVFPMMAGLPGAQLYFNLAFFVVLVSLLVQGASLTTAARLAKVELPPKPLPVSRSGVEIYPSSEWEVFVYRLSESKWCIGEPLKRLAMPDGTRIAAVFRDDTLLHPSGSTRLEAGDILCVLGQEKSLEALSNLFSQAPENKEVQRFFGDFFIETDVKLADLAPIYGLSLDNLADDMTVADLVVLQLGANPVLGDQFQWQSLHWVVAGLYEGKVTNVGIRLPTEHSL.

13 consecutive transmembrane segments (helical) span residues 6–26 (INSF…LSPM), 34–54 (ILLI…GGIL), 58–78 (YSTA…DGGM), 87–107 (VALW…TSIT), 109–129 (MMAA…GAIV), 163–183 (PMAV…DTEM), 185–205 (FSFM…LGLG), 219–239 (LADG…YAAS), 242–262 (LGGS…NKPT), 271–291 (VLDG…GLLL), 299–319 (ILIP…PVAV), 335–355 (WFIS…VFPM), and 359–379 (LPGA…SLLV). Residues 405–486 (SGVEIYPSSE…LEALSNLFSQ (82 aa)) form the RCK C-terminal domain.

Belongs to the monovalent cation:proton antiporter 1 (CPA1) transporter (TC 2.A.36) family. NhaP2 subfamily.

Its subcellular location is the cell inner membrane. The catalysed reaction is K(+)(in) + H(+)(out) = K(+)(out) + H(+)(in). Its function is as follows. K(+)/H(+) antiporter that extrudes potassium in exchange for external protons and maintains the internal concentration of potassium under toxic levels. The protein is K(+)/H(+) antiporter NhaP2 of Shewanella baltica (strain OS195).